Consider the following 374-residue polypeptide: Putative 12-oxophytodienoate reductase 5 (374 aa).

Residues Pro-30–Thr-32, Ala-63, and Gln-105 each bind FMN. Residue His-177–Asn-180 participates in substrate binding. The Proton donor role is filled by Tyr-182. An FMN-binding site is contributed by Arg-229. Arg-270 contacts substrate. FMN-binding positions include Gly-300 and Gly-321–Arg-322.

This sequence belongs to the NADH:flavin oxidoreductase/NADH oxidase family. FMN is required as a cofactor.

In terms of biological role, putative oxophytodienoate reductase that may be involved in the biosynthesis or metabolism of oxylipin signaling molecules. This is Putative 12-oxophytodienoate reductase 5 (OPR5) from Oryza sativa subsp. japonica (Rice).